We begin with the raw amino-acid sequence, 2201 residues long: Activating signal cointegrator 1 complex subunit 3 (2201 aa).

S12 bears the Phosphoserine mark. Coiled-coil stretches lie at residues 18–81 (KQDN…KQIV) and 328–356 (IQSE…KAGE). A Helicase ATP-binding 1 domain is found at 486 to 669 (ETAYNTNENM…FLHVNPCIGL (184 aa)). 499–506 (APTGAGKT) provides a ligand contact to ATP. The residue at position 572 (K572) is an N6-acetyllysine. A DEVH box motif is present at residues 611–614 (DEVH). One can recognise a Helicase C-terminal 1 domain in the interval 696–914 (QLNNMDEVCY…GTVTNVEEAV (219 aa)). The 310-residue stretch at 978-1287 (STDLGRTASH…GAEAVCIINF (310 aa)) folds into the SEC63 1 domain. The region spanning 1336–1511 (HTLYHTDCNV…WLNIRQMGLF (176 aa)) is the Helicase ATP-binding 2 domain. 1349–1356 (APTGSGKT) is an ATP binding site. A DEIH box motif is present at residues 1453–1456 (DEIH). In terms of domain architecture, Helicase C-terminal 2 spans 1544 to 1739 (PTFQAIRSHS…VLSDHLNAEI (196 aa)). The SEC63 2 domain maps to 1812–2176 (PLTYGRIASY…LGLDQQYDIH (365 aa)).

Belongs to the helicase family. In terms of assembly, identified in the ASCC complex that contains ASCC1, ASCC2 and ASCC3. Functions as a scaffolding subunit that interacts directly with both ASCC1 and ASCC2. Interacts directly with ALKBH3, and thereby recruits ALKBH3 to the ASCC complex. Part of the ASC-1/TRIP4 complex, that contains TRIP4, ASCC1, ASCC2 and ASCC3. Part of the RQT (ribosome quality control trigger) complex, that contains ASCC2, ASCC3 and TRIP4. Associates with ribosomes; recruited to collided ribosomes. Interacts with ZCCHC4. Interacts with ZNF598. Interacts with RPS3.

The protein localises to the nucleus. The protein resides in the nucleus speckle. It localises to the cytoplasm. Its subcellular location is the cytosol. The enzyme catalyses Couples ATP hydrolysis with the unwinding of duplex DNA by translocating in the 3'-5' direction.. It carries out the reaction ATP + H2O = ADP + phosphate + H(+). Its function is as follows. ATPase involved both in DNA repair and rescue of stalled ribosomes. 3'-5' DNA helicase involved in repair of alkylated DNA: promotes DNA unwinding to generate single-stranded substrate needed for ALKBH3, enabling ALKBH3 to process alkylated N3-methylcytosine (3mC) within double-stranded regions. Also involved in activation of the ribosome quality control (RQC) pathway, a pathway that degrades nascent peptide chains during problematic translation. Drives the splitting of stalled ribosomes that are ubiquitinated in a ZNF598-dependent manner, as part of the ribosome quality control trigger (RQT) complex. Part of the ASC-1 complex that enhances NF-kappa-B, SRF and AP1 transactivation. The polypeptide is Activating signal cointegrator 1 complex subunit 3 (ascc3) (Bos taurus (Bovine)).